The following is a 590-amino-acid chain: KNR4/SMI1 homolog 2 (590 aa).

Disordered stretches follow at residues 59 to 97 (SSSH…SNTN), 216 to 239 (FQHQ…ETHG), and 407 to 590 (TPQR…DVAL). Polar residues predominate over residues 71 to 85 (GSRTSLSRNGSSTTV). The segment covering 217-226 (QHQQQQQQHQ) has biased composition (low complexity). Polar residues predominate over residues 430-454 (PSMSGATANTNKSQNPLINMESSSK). Basic and acidic residues-rich tracts occupy residues 470-481 (PEEPVKKSEVKS) and 489-515 (EPEK…AKED). The span at 516 to 528 (DKEEEEEEQEEEK) shows a compositional bias: acidic residues. Basic residues predominate over residues 554 to 568 (TQKKNQSKKAKKQQQ). Over residues 576 to 590 (NDVEEVAEDLNDVAL) the composition is skewed to acidic residues.

It belongs to the KNR4/SMI1 family.

In Debaryomyces hansenii (strain ATCC 36239 / CBS 767 / BCRC 21394 / JCM 1990 / NBRC 0083 / IGC 2968) (Yeast), this protein is KNR4/SMI1 homolog 2.